The chain runs to 816 residues: Phosphatidylinositol 4-kinase beta (816 aa).

Disordered stretches follow at residues Met-1–Leu-30, Glu-101–Arg-120, and Ala-248–Ser-318. The residue at position 2 (Gly-2) is an N-acetylglycine. The interval Gly-2–Ile-68 is interaction with ACBD3. One can recognise a PIK helical domain in the interval Leu-29–Ser-242. Ser-258 is subject to Phosphoserine. Thr-263 carries the phosphothreonine modification. Residues Ser-266, Ser-275, Ser-277, Ser-284, and Ser-294 each carry the phosphoserine modification. Composition is skewed to polar residues over residues Asp-278 to Lys-297 and Ser-306 to Ser-318. Ser-428 bears the Phosphoserine mark. Phosphothreonine is present on Thr-438. A Phosphoserine modification is found at Ser-511. Thr-517 and Thr-519 each carry phosphothreonine. Residues Glu-535–Thr-801 form the PI3K/PI4K catalytic domain. The G-loop stretch occupies residues Val-541–Gly-547. The tract at residues Gln-668–Asn-676 is catalytic loop. The tract at residues His-687–Thr-711 is activation loop.

This sequence belongs to the PI3/PI4-kinase family. Type III PI4K subfamily. As to quaternary structure, interacts with ARF1 and ARF3 in the Golgi complex, but not with ARF4, ARF5 or ARF6. Interacts with NCS1/FREQ in a calcium-independent manner. Interacts with CALN1/CABP8 and CALN2/CABP7; in a calcium-dependent manner; this interaction competes with NCS1/FREQ binding. Interacts with ACBD3. Interacts with ARMH3, YWHAB, YWHAE, YWHAG, YWHAH, YWHAQ, YWHAZ and SFN. Interacts with GGA2 (via VHS domain); the interaction is important for PI4KB location at the Golgi apparatus membrane. Interacts with ATG9A. It depends on Mg(2+) as a cofactor. Mn(2+) is required as a cofactor.

The protein resides in the endomembrane system. Its subcellular location is the mitochondrion outer membrane. It is found in the rough endoplasmic reticulum membrane. The protein localises to the golgi apparatus. It localises to the golgi apparatus membrane. It carries out the reaction a 1,2-diacyl-sn-glycero-3-phospho-(1D-myo-inositol) + ATP = a 1,2-diacyl-sn-glycero-3-phospho-(1D-myo-inositol 4-phosphate) + ADP + H(+). Inhibited by wortmannin. Increased kinase activity upon interaction with NCS1/FREQ. Its function is as follows. Phosphorylates phosphatidylinositol (PI) in the first committed step in the production of the second messenger inositol-1,4,5,-trisphosphate (PIP). May regulate Golgi disintegration/reorganization during mitosis, possibly via its phosphorylation. Involved in Golgi-to-plasma membrane trafficking. The polypeptide is Phosphatidylinositol 4-kinase beta (PI4KB) (Bos taurus (Bovine)).